A 156-amino-acid chain; its full sequence is MPRRARKFKRAVAPDSRYNSLMLSNFINKLMMHGQKATAQRIVYDAIDIMGKQENKEGLAVFEQGLKNATPFIEVKPRRVGGATYQVPIEVRPDRAQTMAMRWIIKAARKRTGKSMAERLASEMLEASREQGAAVKKREETHKMAEANRAFAHYRW.

Belongs to the universal ribosomal protein uS7 family. In terms of assembly, part of the 30S ribosomal subunit. Contacts proteins S9 and S11.

Functionally, one of the primary rRNA binding proteins, it binds directly to 16S rRNA where it nucleates assembly of the head domain of the 30S subunit. Is located at the subunit interface close to the decoding center, probably blocks exit of the E-site tRNA. The chain is Small ribosomal subunit protein uS7 from Dehalococcoides mccartyi (strain ATCC BAA-2100 / JCM 16839 / KCTC 5957 / BAV1).